The chain runs to 111 residues: ATP-dependent Clp protease adapter protein ClpS (111 aa).

The protein belongs to the ClpS family. As to quaternary structure, binds to the N-terminal domain of the chaperone ClpA.

Functionally, involved in the modulation of the specificity of the ClpAP-mediated ATP-dependent protein degradation. This chain is ATP-dependent Clp protease adapter protein ClpS, found in Legionella pneumophila (strain Corby).